Consider the following 252-residue polypeptide: MKTVTVKDLVIGAGAPKIIVSLMAKDIARVKSEALAYREADFDILEWRVDHFADLSNVESVMAAAKILRETMPEKPLLFTFRSAKEGGEQAISTEAYIALNRAAIDSGLVDMIDLELFTGDDQVKETVAYAHAHDVKVVMSNHDFHKTPEAEEIIARLRKMQSFDADIPKIALMPQSTSDVLTLLAATLEMQEQYADRPIITMSMAKTGVISRLAGEVFGSAATFGAVKKASAPGQISVTDLRTVLTILHQA.

3-dehydroquinate-binding positions include S21, 46 to 48 (EWR), and R82. H143 (proton donor/acceptor) is an active-site residue. K170 (schiff-base intermediate with substrate) is an active-site residue. Residues R213, S232, and Q236 each coordinate 3-dehydroquinate.

The protein belongs to the type-I 3-dehydroquinase family. In terms of assembly, homodimer.

The enzyme catalyses 3-dehydroquinate = 3-dehydroshikimate + H2O. It participates in metabolic intermediate biosynthesis; chorismate biosynthesis; chorismate from D-erythrose 4-phosphate and phosphoenolpyruvate: step 3/7. Involved in the third step of the chorismate pathway, which leads to the biosynthesis of aromatic amino acids. Catalyzes the cis-dehydration of 3-dehydroquinate (DHQ) and introduces the first double bond of the aromatic ring to yield 3-dehydroshikimate. This Escherichia coli O9:H4 (strain HS) protein is 3-dehydroquinate dehydratase.